We begin with the raw amino-acid sequence, 364 residues long: Developmentally-regulated GTP-binding protein 2 (364 aa).

Lysine 21 bears the (3S)-3-hydroxylysine mark. Positions 63–288 constitute an OBG-type G domain; it reads ARVALIGFPS…LLEMLWEYLA (226 aa). Residues 69–76, 94–98, 115–118, 246–249, and 269–271 each bind GTP; these read GFPSVGKS, FTTLT, DLPG, NKID, and SCG. Positions 76 and 96 each coordinate Mg(2+). The TGS domain occupies 288 to 363; that stretch reads ALTCIYTKKR…EHEDVIQIVK (76 aa).

The protein belongs to the TRAFAC class OBG-HflX-like GTPase superfamily. OBG GTPase family. Interacts with RWDD1; this interaction confers protection to polyubiquitination and proteolytic degradation. Interacts with JMJD7; this interaction is direct. The cofactor is Mg(2+). Post-translationally, polyubiquitinated. In terms of processing, hydroxylated (with S stereochemistry) at C-3 of Lys-21 by JMJD7.

The protein resides in the nucleus. It is found in the cytoplasm. The enzyme catalyses GTP + H2O = GDP + phosphate + H(+). Catalyzes the conversion of GTP to GDP through hydrolysis of the gamma-phosphate bond in GTP. When hydroxylated at C-3 of 'Lys-21' by JMJD7, may bind to RNA and play a role in translation. This chain is Developmentally-regulated GTP-binding protein 2 (DRG2), found in Bos taurus (Bovine).